A 150-amino-acid polypeptide reads, in one-letter code: MKKLLSLVIIVVGIIADQVFKNWVVANIQLGDTKKIWPDVLSLTYIKNDGAAWSSFSGQQWFFLVLTPIVLIVALWFLWKKMGQNWYFAGLTLIIAGALGNFIDRVRQGFVVDMFQTEFMDFPIFNIADILLSVGFVVLFIAILTDKETK.

The next 3 helical transmembrane spans lie at 5–25 (LSLV…NWVV), 59–79 (QQWF…WFLW), and 83–103 (GQNW…GNFI). Active-site residues include Asp-113 and Asp-129. A helical transmembrane segment spans residues 124 to 144 (IFNIADILLSVGFVVLFIAIL).

It belongs to the peptidase A8 family.

The protein resides in the cell membrane. The catalysed reaction is Release of signal peptides from bacterial membrane prolipoproteins. Hydrolyzes -Xaa-Yaa-Zaa-|-(S,diacylglyceryl)Cys-, in which Xaa is hydrophobic (preferably Leu), and Yaa (Ala or Ser) and Zaa (Gly or Ala) have small, neutral side chains.. It participates in protein modification; lipoprotein biosynthesis (signal peptide cleavage). In terms of biological role, this protein specifically catalyzes the removal of signal peptides from prolipoproteins. This Lactococcus lactis subsp. cremoris (strain MG1363) protein is Lipoprotein signal peptidase.